A 388-amino-acid chain; its full sequence is Glutamate 5-kinase (388 aa).

Lys-21 contributes to the ATP binding site. Positions 61, 148, and 160 each coordinate substrate. ATP contacts are provided by residues 180–181 (TD) and 222–228 (TGGMITK). A PUA domain is found at 285-363 (RGSVFLDPGA…RWLARELGAE (79 aa)).

The protein belongs to the glutamate 5-kinase family.

It is found in the cytoplasm. The enzyme catalyses L-glutamate + ATP = L-glutamyl 5-phosphate + ADP. Its pathway is amino-acid biosynthesis; L-proline biosynthesis; L-glutamate 5-semialdehyde from L-glutamate: step 1/2. Functionally, catalyzes the transfer of a phosphate group to glutamate to form L-glutamate 5-phosphate. In Thermobifida fusca (strain YX), this protein is Glutamate 5-kinase.